A 251-amino-acid chain; its full sequence is Hydroxyacylglutathione hydrolase (251 aa).

7 residues coordinate Zn(2+): H53, H55, D57, H58, H110, D127, and H165.

The protein belongs to the metallo-beta-lactamase superfamily. Glyoxalase II family. In terms of assembly, monomer. Zn(2+) is required as a cofactor.

The catalysed reaction is an S-(2-hydroxyacyl)glutathione + H2O = a 2-hydroxy carboxylate + glutathione + H(+). It functions in the pathway secondary metabolite metabolism; methylglyoxal degradation; (R)-lactate from methylglyoxal: step 2/2. Its function is as follows. Thiolesterase that catalyzes the hydrolysis of S-D-lactoyl-glutathione to form glutathione and D-lactic acid. The chain is Hydroxyacylglutathione hydrolase from Klebsiella pneumoniae subsp. pneumoniae (strain ATCC 700721 / MGH 78578).